Consider the following 308-residue polypeptide: Ectoine dioxygenase (308 aa).

Gln-131 is an L-ectoine binding site. Lys-137 serves as a coordination point for 2-oxoglutarate. Residues His-148, Asp-150, and His-249 each coordinate Fe cation.

The protein belongs to the PhyH family. EctD subfamily. As to quaternary structure, homodimer. Requires Fe(2+) as cofactor.

It catalyses the reaction L-ectoine + 2-oxoglutarate + O2 = 5-hydroxyectoine + succinate + CO2. In terms of biological role, involved in the biosynthesis of 5-hydroxyectoine, called compatible solute, which helps organisms to survive extreme osmotic stress by acting as a highly soluble organic osmolyte. Catalyzes the 2-oxoglutarate-dependent selective hydroxylation of L-ectoine to yield (4S,5S)-5-hydroxyectoine. This Bordetella bronchiseptica (strain ATCC BAA-588 / NCTC 13252 / RB50) (Alcaligenes bronchisepticus) protein is Ectoine dioxygenase.